A 77-amino-acid polypeptide reads, in one-letter code: Small ribosomal subunit protein uS17 (77 aa).

Belongs to the universal ribosomal protein uS17 family. As to quaternary structure, part of the 30S ribosomal subunit.

In terms of biological role, one of the primary rRNA binding proteins, it binds specifically to the 5'-end of 16S ribosomal RNA. This chain is Small ribosomal subunit protein uS17, found in Wolbachia sp. subsp. Brugia malayi (strain TRS).